Consider the following 359-residue polypeptide: uncharacterized protein (359 aa).

Residues 1–15 form the signal peptide; that stretch reads MSIVLAIDTATAAVT. Residues 212-359 form the N-acetyltransferase domain; it reads IVIGTLTPAD…DAYLMRREAQ (148 aa).

This is an uncharacterized protein from Mycobacterium leprae (strain TN).